The chain runs to 1025 residues: MLTWFLFYFSEISCDPPPEVKNARKPYYSLPIVPGTVLRYTCSPSYRLIGEKAIFCISENQVHATWDKAPPICESVNKTISCSDPIVPGGFMNKGSKAPFRHGDSVTFTCKANFTMKGSKTVWCQANEMWGPTALPVCESDFPLECPSLPTIHNGHHTGQHVDQFVAGLSVTYSCEPGYLLTGKKTIKCLSSGDWDGVIPTCKEAQCEHPGKFPNGQVKEPLSLQVGTTVYFSCNEGYQLQGQPSSQCVIVEQKAIWTKKPVCKEILCPPPPPVRNGSHTGSFSENVPYGSTVTYTCDPSPEKGVSFTLIGEKTINCTTGSQKTGIWSGPAPYCVLSTSAVLCLQPKIKRGQILSILKDSYSYNDTVAFSCEPGFTLKGNRSIRCNAHGTWEPPVPVCEKGCQAPPKIINGQKEDSYLLNFDPGTSIRYSCDPGYLLVGEDTIHCTPEGKWTPITPQCTVAECKPVGPHLFKRPQNQFIRTAVNSSCDEGFQLSESAYQLCQGTIPWFIEIRLCKEITCPPPPVIHNGTHTWSSSEDVPYGTVVTYMCYPGPEEGVKFKLIGEQTIHCTSDSRGRGSWSSPAPLCKLSLPAVQCTDVHVENGVKLTDNKAPYFYNDSVMFKCDDGYILSGSSQIRCKANNTWDPEKPLCKKEGCEPMRVHGLPDDSHIKLVKRTCQNGYQLTGYTYEKCQNAENGTWFKKIEVCTVILCQPPPKIANGGHTGMMAKHFLYGNEVSYECDEGFYLLGEKSLQCVNDSKGHGSWSGPPPQCLQSSPLTHCPDPEVKHGYKLNKTHSAFSHNDIVHFVCNQGFIMNGSHLIRCHTNNTWLPGVPTCIRKASLGCQSPSTIPNGNHTGGSIARFPPGMSVMYSCYQGFLMAGEARLICTHEGTWSQPPPFCKEVNCSFPEDTNGIQKGFQPGKTYRFGATVTLECEDGYTLEGSPQSQCQDDSQWNPPLALCKYRRWSTIPLICGISVGSALIILMSVGFCMILKHRESNYYTKTRPKEGALHLETREVYSIDPYNPAS.

A signal peptide spans 1–11 (MLTWFLFYFSE). One can recognise a Sushi 1 domain in the interval 12 to 75 (ISCDPPPEVK…WDKAPPICES (64 aa)). The Extracellular segment spans residues 12–963 (ISCDPPPEVK…PLALCKYRRW (952 aa)). 2 cysteine pairs are disulfide-bonded: Cys-14/Cys-56 and Cys-42/Cys-73. Residues Asn-77 and Asn-113 are each glycosylated (N-linked (GlcNAc...) asparagine). Sushi domains are found at residues 80–140 (ISCS…VCES), 144–204 (LECP…TCKE), 205–265 (AQCE…VCKE), 266–336 (ILCP…YCVL), 341–400 (VLCL…VCEK), 401–460 (GCQA…QCTV), 461–516 (AECK…LCKE), 517–587 (ITCP…LCKL), 592–651 (VQCT…LCKK), 652–706 (EGCE…VCTV), 707–771 (ILCQ…QCLQ), 776–835 (THCP…TCIR), 839–899 (LGCQ…FCKE), and 900–960 (VNCS…LCKY). 26 disulfide bridges follow: Cys-82–Cys-124, Cys-110–Cys-138, Cys-146–Cys-189, Cys-175–Cys-202, Cys-207–Cys-248, Cys-234–Cys-263, Cys-268–Cys-317, Cys-297–Cys-334, Cys-343–Cys-385, Cys-371–Cys-398, Cys-402–Cys-445, Cys-431–Cys-458, Cys-463–Cys-501, Cys-487–Cys-514, Cys-519–Cys-568, Cys-548–Cys-585, Cys-594–Cys-636, Cys-622–Cys-649, Cys-654–Cys-689, Cys-675–Cys-704, Cys-709–Cys-752, Cys-738–Cys-769, Cys-778–Cys-820, Cys-806–Cys-833, Cys-841–Cys-884, and Cys-870–Cys-897. N-linked (GlcNAc...) asparagine glycosylation is found at Asn-276, Asn-316, Asn-364, and Asn-380. Asn-484 carries an N-linked (GlcNAc...) asparagine glycan. Asn-527 carries N-linked (GlcNAc...) asparagine glycosylation. Asn-615 and Asn-639 each carry an N-linked (GlcNAc...) asparagine glycan. A glycan (N-linked (GlcNAc...) asparagine) is linked at Asn-694. 5 N-linked (GlcNAc...) asparagine glycosylation sites follow: Asn-754, Asn-790, Asn-813, Asn-823, and Asn-851. Asn-901 carries N-linked (GlcNAc...) asparagine glycosylation. 2 disulfide bridges follow: Cys-902-Cys-945 and Cys-931-Cys-958. Residues 964 to 990 (STIPLICGISVGSALIILMSVGFCMIL) form a helical membrane-spanning segment. Residues 991–1025 (KHRESNYYTKTRPKEGALHLETREVYSIDPYNPAS) are Cytoplasmic-facing.

The protein belongs to the receptors of complement activation (RCA) family. In terms of assembly, interacts (via Sushi domain 1 and 2) with C3. Interacts with CD19. Part of a complex composed of CD19, CR2/CD21, CD81 and IFITM1/CD225 in the membrane of mature B-cells. Interacts (via Sushi domain 1 and 2) with FCER2 (via the C-terminus). Interacts with CD23. Interacts with FCRL5. Interacts with CR1. Interacts with INFNA1. As to expression, B-lymphocytes.

The protein localises to the cell membrane. Its function is as follows. Serves as a receptor for various ligands including complement component CD3d, HNRNPU OR IFNA1. When C3d is bound to antigens, attaches to C3d on B-cell surface and thereby facilitates the recognition and uptake of antigens by B-cells. This interaction enhances B-cell activation and subsequent immune responses. Forms a complex with several partners on the surface of B-cells including CD19, FCRL5 and CD81, to form the B-cell coreceptor complex that plays a crucial role in B-cell activation and signaling. Also induces specific intracellular signaling separately from the BCR and CD19 by activating the tyrosine kinase SRC, which then phosphorylates nucleolin/NCL and triggers AKT and GSK3 kinase activities in a SYK/CD19-independent manner. Acts as a ligand for CD23 (FcepsilonRII), a low-affinity receptor for IgE, which is expressed on B-cells and other immune cells, and thus participates in the regulation of IgE production. The protein is Complement receptor type 2 (Cr2) of Mus musculus (Mouse).